The primary structure comprises 603 residues: NADH-quinone oxidoreductase subunit C/D (603 aa).

The interval 1-193 (MVNNMTDLTA…DPFTLTKQKE (193 aa)) is NADH dehydrogenase I subunit C. Residues 217 to 603 (DFMFLNLGPN…IDFVMSDVDR (387 aa)) are NADH dehydrogenase I subunit D.

This sequence in the N-terminal section; belongs to the complex I 30 kDa subunit family. In the C-terminal section; belongs to the complex I 49 kDa subunit family. NDH-1 is composed of 13 different subunits. Subunits NuoB, CD, E, F, and G constitute the peripheral sector of the complex.

It is found in the cell inner membrane. It catalyses the reaction a quinone + NADH + 5 H(+)(in) = a quinol + NAD(+) + 4 H(+)(out). NDH-1 shuttles electrons from NADH, via FMN and iron-sulfur (Fe-S) centers, to quinones in the respiratory chain. The immediate electron acceptor for the enzyme in this species is believed to be ubiquinone. Couples the redox reaction to proton translocation (for every two electrons transferred, four hydrogen ions are translocated across the cytoplasmic membrane), and thus conserves the redox energy in a proton gradient. This Cronobacter sakazakii (strain ATCC BAA-894) (Enterobacter sakazakii) protein is NADH-quinone oxidoreductase subunit C/D.